We begin with the raw amino-acid sequence, 247 residues long: UPF0259 membrane protein BU276 (247 aa).

6 helical membrane-spanning segments follow: residues 20-40, 85-105, 114-134, 137-157, 188-208, and 218-238; these read IGAIFFISIFATFMNILIDMF, IMESLISKTTLLGSIIILISV, IVSSIRTFFLFFPSLFILNFL, FIIQIGFMLLIIPGILLSIIL, IIGPGVLFWMCGKFILTMLLA, and LFLISNISMNILFSILIIYLF.

Belongs to the UPF0259 family.

The protein resides in the cell membrane. The sequence is that of UPF0259 membrane protein BU276 from Buchnera aphidicola subsp. Acyrthosiphon pisum (strain APS) (Acyrthosiphon pisum symbiotic bacterium).